The following is a 380-amino-acid chain: MASLRKTHPLLKIANDALVDLPSPANISVWWNFGSLLGLCLASQILTGLFLAMHYTPDVESAFNSVAHICRDVNFGWLIRNMHANGASFFFICLYLHIGRGLYYGSYLFVETWNVGVVLLLLVMMTAFVGYVLPWGQMSFWGATVITNLLSAVPYVGTTLVEWIWGGFSVDNATLTRFFAFHFLFPFVILAAAVLHLLFLHETGSNNPIGLNSNADKISFHPYFTYKDLLGFAVLLMGLTSLALFSPNLLGDPDNFTPANPMVTPPHIKPEWYFLFAYAILRSIPNKLGGVLALLASILILMVVPFLHTSKQRALTFRPASQFLFWTLVADVVVLTWIGGMPAEQPFIIIGQVASVLYFSLFLVLFPLAGWAENKVLGWT.

The next 4 helical transmembrane spans lie at 33 to 53 (FGSL…FLAM), 77 to 98 (WLIR…YLHI), 113 to 133 (WNVG…GYVL), and 178 to 198 (FFAF…LHLL). 2 residues coordinate heme b: His83 and His97. His182 and His196 together coordinate heme b. His201 contributes to the a ubiquinone binding site. 4 helical membrane-spanning segments follow: residues 226–246 (YKDL…ALFS), 288–308 (LGGV…PFLH), 320–340 (ASQF…WIGG), and 347–367 (FIII…VLFP).

The protein belongs to the cytochrome b family. As to quaternary structure, the cytochrome bc1 complex contains 3 respiratory subunits (MT-CYB, CYC1 and UQCRFS1), 2 core proteins (UQCRC1 and UQCRC2) and probably 6 low-molecular weight proteins. Heme b is required as a cofactor.

It is found in the mitochondrion inner membrane. Its function is as follows. Component of the ubiquinol-cytochrome c reductase complex (complex III or cytochrome b-c1 complex) that is part of the mitochondrial respiratory chain. The b-c1 complex mediates electron transfer from ubiquinol to cytochrome c. Contributes to the generation of a proton gradient across the mitochondrial membrane that is then used for ATP synthesis. This is Cytochrome b (mt-cyb) from Scomber scombrus (Atlantic mackerel).